Reading from the N-terminus, the 415-residue chain is uncharacterized protein (415 aa).

A TRAM domain is found at 1–55 (MSTGTVTIDRLGAQGDGVARTEAGPVFAPFTLPGETVSLAVNKANGTLISLKEAS). [4Fe-4S] cluster is bound by residues cysteine 63, cysteine 75, cysteine 78, and cysteine 152. S-adenosyl-L-methionine-binding residues include glutamine 252, phenylalanine 279, glutamate 299, and aspartate 347. The Nucleophile role is filled by cysteine 373.

This sequence belongs to the class I-like SAM-binding methyltransferase superfamily. RNA M5U methyltransferase family.

This is an uncharacterized protein from Rhizobium meliloti (strain 1021) (Ensifer meliloti).